A 513-amino-acid chain; its full sequence is Putative zinc finger CCCH domain-containing protein 51 (513 aa).

A disordered region spans residues 155 to 180; that stretch reads SMPRNSPNAGRNLVGHPHSSSKSSSK. Positions 170 to 180 are enriched in low complexity; sequence HPHSSSKSSSK. A C3H1-type zinc finger spans residues 176–204; the sequence is KSSSKPCHFHFFRGYCKKGVNCQFFHGSV. Residues 218 to 299 form the HTH OST-type domain; that stretch reads SLSKLDMEIR…HGQYHVVLVE (82 aa). An RRM domain is found at 325 to 411; sequence NQIYMTFPVH…SELRMTWLKS (87 aa).

The polypeptide is Putative zinc finger CCCH domain-containing protein 51 (Oryza sativa subsp. japonica (Rice)).